Reading from the N-terminus, the 241-residue chain is tRNA (guanine-N(7)-)-methyltransferase (241 aa).

Glu76, Glu101, Asp128, and Asp150 together coordinate S-adenosyl-L-methionine. Asp150 is an active-site residue. Residues Lys154, Asp186, and 219-222 (TRYE) contribute to the substrate site.

This sequence belongs to the class I-like SAM-binding methyltransferase superfamily. TrmB family.

The catalysed reaction is guanosine(46) in tRNA + S-adenosyl-L-methionine = N(7)-methylguanosine(46) in tRNA + S-adenosyl-L-homocysteine. The protein operates within tRNA modification; N(7)-methylguanine-tRNA biosynthesis. In terms of biological role, catalyzes the formation of N(7)-methylguanine at position 46 (m7G46) in tRNA. This Cereibacter sphaeroides (strain ATCC 17023 / DSM 158 / JCM 6121 / CCUG 31486 / LMG 2827 / NBRC 12203 / NCIMB 8253 / ATH 2.4.1.) (Rhodobacter sphaeroides) protein is tRNA (guanine-N(7)-)-methyltransferase.